We begin with the raw amino-acid sequence, 281 residues long: Peptidyl-prolyl cis-trans isomerase CYP28, chloroplastic (281 aa).

The N-terminal 24 residues, methionine 1–alanine 24, are a transit peptide targeting the chloroplast. The 203-residue stretch at serine 66–glutamate 268 folds into the PPIase cyclophilin-type domain.

This sequence belongs to the cyclophilin-type PPIase family. S-nytrosylated during the hypersensitive disease resistance response. Ubiquitous. Not detected in roots.

It is found in the plastid. It localises to the chloroplast. It catalyses the reaction [protein]-peptidylproline (omega=180) = [protein]-peptidylproline (omega=0). Its function is as follows. PPIases accelerate the folding of proteins. It catalyzes the cis-trans isomerization of proline imidic peptide bonds in oligopeptides. This Arabidopsis thaliana (Mouse-ear cress) protein is Peptidyl-prolyl cis-trans isomerase CYP28, chloroplastic (CYP28).